The following is a 297-amino-acid chain: 4-hydroxy-tetrahydrodipicolinate synthase (297 aa).

Residue threonine 47 participates in pyruvate binding. Residue tyrosine 136 is the Proton donor/acceptor of the active site. Lysine 165 (schiff-base intermediate with substrate) is an active-site residue. Isoleucine 206 lines the pyruvate pocket.

It belongs to the DapA family. Homotetramer; dimer of dimers.

The protein localises to the cytoplasm. It carries out the reaction L-aspartate 4-semialdehyde + pyruvate = (2S,4S)-4-hydroxy-2,3,4,5-tetrahydrodipicolinate + H2O + H(+). Its pathway is amino-acid biosynthesis; L-lysine biosynthesis via DAP pathway; (S)-tetrahydrodipicolinate from L-aspartate: step 3/4. Catalyzes the condensation of (S)-aspartate-beta-semialdehyde [(S)-ASA] and pyruvate to 4-hydroxy-tetrahydrodipicolinate (HTPA). The chain is 4-hydroxy-tetrahydrodipicolinate synthase from Campylobacter fetus subsp. fetus (strain 82-40).